The sequence spans 156 residues: MPRRRVIGQRKILPDPKFGSELLAKFVNILMVDGKKSTAESIVYSALETLAQRSGKTELEAFETALENVRPTVEVKSRRVGGSTYQVPVEVRPVRRNALAMRWIVEAARKRGDKSMALRLANELSDAAENKGTAVKKREDVHRMAEANKAFAHYRW.

It belongs to the universal ribosomal protein uS7 family. In terms of assembly, part of the 30S ribosomal subunit. Contacts proteins S9 and S11.

One of the primary rRNA binding proteins, it binds directly to 16S rRNA where it nucleates assembly of the head domain of the 30S subunit. Is located at the subunit interface close to the decoding center, probably blocks exit of the E-site tRNA. The polypeptide is Small ribosomal subunit protein uS7 (Edwardsiella ictaluri (strain 93-146)).